The following is a 199-amino-acid chain: MTTLTAQQIACVYAWLAQLFSRELDDEQLTQIASAQMAEWFSLLKSEPPLTAAVNGLENSIATLTVRDDARLELAADFCGLFLMTDKQAALPYASANKQDEQEIKRLLVEAGMETSGNFNEPADHLAIYLDLLSHLHFSLGEGTVPARRIDGLRQKTLTALREWLPEFAARCRQYDSFGFYAALSQLLLVLVECDYQKR.

The protein belongs to the TorD/DmsD family. TorD subfamily.

Its subcellular location is the cytoplasm. In terms of biological role, involved in the biogenesis of TorA. Acts on TorA before the insertion of the molybdenum cofactor and, as a result, probably favors a conformation of the apoenzyme that is competent for acquiring the cofactor. The chain is Chaperone protein TorD from Escherichia coli O127:H6 (strain E2348/69 / EPEC).